Consider the following 268-residue polypeptide: Activator of basal transcription 1 (268 aa).

A coiled-coil region spans residues 6–38; the sequence is KLVEEQKAAMEEEKEVNAEAAEELEEAEEASCN. An RRM domain is found at 47 to 144; the sequence is GIVYLGHVPP…RKRSPFRYDL (98 aa). The stretch at 163 to 193 forms a coiled coil; it reads AFERQVRRQRLRAEVAQAKRETDFYLRNVEQ. Residues 200–242 form a disordered region; it reads ADGDATRPNSSWTFTQRPTEQELRAQKGARPGGRERARLATVQ. The segment covering 206 to 217 has biased composition (polar residues); sequence RPNSSWTFTQRP.

This sequence belongs to the ESF2/ABP1 family. In terms of assembly, interacts with IGHMBP2. Interacts with ESF1/ABTAP.

The protein localises to the nucleus. It localises to the nucleolus. May be a novel TATA-binding protein (TBP) which can function as a basal transcription activator. Can act as a regulator of basal transcription for class II genes. This Rattus norvegicus (Rat) protein is Activator of basal transcription 1 (Abt1).